The sequence spans 109 residues: Nucleoid-associated protein SO_2014 (109 aa).

The protein belongs to the YbaB/EbfC family. In terms of assembly, homodimer.

The protein localises to the cytoplasm. Its subcellular location is the nucleoid. Functionally, binds to DNA and alters its conformation. May be involved in regulation of gene expression, nucleoid organization and DNA protection. This Shewanella oneidensis (strain ATCC 700550 / JCM 31522 / CIP 106686 / LMG 19005 / NCIMB 14063 / MR-1) protein is Nucleoid-associated protein SO_2014.